A 391-amino-acid chain; its full sequence is Putative B3 domain-containing protein Os08g0325100 (391 aa).

The TF-B3 DNA-binding region spans 32-125 (GDFQHEIRGE…QFDVIIFDQV (94 aa)). The disordered stretch occupies residues 143 to 232 (VQEGRTDATE…SSRAHPQPMP (90 aa)). The span at 172 to 226 (EGRTNATETLNSSRAHSQPMPMQTPATETLNSSRAHSQDMPMQSPATETLNSSRA) shows a compositional bias: polar residues.

It is found in the nucleus. This is Putative B3 domain-containing protein Os08g0325100 from Oryza sativa subsp. japonica (Rice).